The primary structure comprises 89 residues: Myrmicitoxin(1)-Pm2a (89 aa).

The signal sequence occupies residues 1–22; that stretch reads MEIPKLLYIAVIAIGLSGSLTC. The propeptide occupies 23–61; it reads ATPLANPWGDPEAEANPEAKATAEATAEAIAEALAEPEP. An Asparagine amide modification is found at asparagine 88.

Belongs to the formicidae venom clade 1 family. Expressed by the venom gland.

It is found in the secreted. Toxin that potently modulates mammalian voltage-gated sodium (Nav) channels, reducing the voltage threshold for activation and inhibiting channel inactivation. Shows activity on hNav1.6/SCN8A (EC(50)=176 nM), mNav1.7/SCN9A (EC(50)=102 nM) and hNav1.7 (EC(50)=154 nM). In vivo, causes spontaneous, gradual and long-lasting nocifensive behaviors by intraplantar injection in mice, as well as pronounced swelling of the injected paw. Does not have effect on insects (blowflies). This is Myrmicitoxin(1)-Pm2a from Pogonomyrmex maricopa (Maricopa harvester ant).